The following is a 230-amino-acid chain: 5'-methylthioadenosine/S-adenosylhomocysteine nucleosidase (230 aa).

Glutamate 12 functions as the Proton acceptor in the catalytic mechanism. Substrate-binding positions include glycine 78, methionine 153, and methionine 174 to glutamate 175. Aspartate 198 (proton donor) is an active-site residue.

It belongs to the PNP/UDP phosphorylase family. MtnN subfamily.

The catalysed reaction is S-adenosyl-L-homocysteine + H2O = S-(5-deoxy-D-ribos-5-yl)-L-homocysteine + adenine. It catalyses the reaction S-methyl-5'-thioadenosine + H2O = 5-(methylsulfanyl)-D-ribose + adenine. It carries out the reaction 5'-deoxyadenosine + H2O = 5-deoxy-D-ribose + adenine. It functions in the pathway amino-acid biosynthesis; L-methionine biosynthesis via salvage pathway; S-methyl-5-thio-alpha-D-ribose 1-phosphate from S-methyl-5'-thioadenosine (hydrolase route): step 1/2. In terms of biological role, catalyzes the irreversible cleavage of the glycosidic bond in both 5'-methylthioadenosine (MTA) and S-adenosylhomocysteine (SAH/AdoHcy) to adenine and the corresponding thioribose, 5'-methylthioribose and S-ribosylhomocysteine, respectively. Also cleaves 5'-deoxyadenosine, a toxic by-product of radical S-adenosylmethionine (SAM) enzymes, into 5-deoxyribose and adenine. The chain is 5'-methylthioadenosine/S-adenosylhomocysteine nucleosidase from Aeromonas salmonicida (strain A449).